Reading from the N-terminus, the 331-residue chain is Adenosine deaminase (331 aa).

Zn(2+) is bound by residues His-12 and His-14. Residues His-14, Asp-16, and Gly-170 each coordinate substrate. His-197 lines the Zn(2+) pocket. The active-site Proton donor is the Glu-200. Asp-278 lines the Zn(2+) pocket. A substrate-binding site is contributed by Asp-279.

This sequence belongs to the metallo-dependent hydrolases superfamily. Adenosine and AMP deaminases family. Adenosine deaminase subfamily. Zn(2+) is required as a cofactor.

The enzyme catalyses adenosine + H2O + H(+) = inosine + NH4(+). It carries out the reaction 2'-deoxyadenosine + H2O + H(+) = 2'-deoxyinosine + NH4(+). Its function is as follows. Catalyzes the hydrolytic deamination of adenosine and 2-deoxyadenosine. The sequence is that of Adenosine deaminase from Shewanella sp. (strain MR-7).